The sequence spans 399 residues: Serine/threonine-protein kinase PknL (399 aa).

At 1–368 the chain is on the cytoplasmic side; the sequence is MVEAGTRDPL…FIWARQHARR (368 aa). The region spanning 19–278 is the Protein kinase domain; it reads YLVQAKIASG…IAMGADLEAI (260 aa). ATP contacts are provided by residues 25-33 and lysine 48; that span reads IASGGTSTV. Threonine 32 bears the Phosphothreonine; by autocatalysis mark. Residue threonine 62 is modified to Phosphothreonine; by autocatalysis. Residue aspartate 142 is the Proton acceptor of the active site. Threonine 173, threonine 175, and threonine 323 each carry phosphothreonine; by autocatalysis. Residues 312-346 form a disordered region; that stretch reads GQLGAKPVHHPTRQLTRQPGDCSEPASGSEPEHEP. The helical transmembrane segment at 369-389 threads the bilayer; it reads MVLVWVSVVLAITGLVASAAW. The Extracellular portion of the chain corresponds to 390 to 399; it reads TIGSNLSGLL.

This sequence belongs to the protein kinase superfamily. Ser/Thr protein kinase family. In terms of processing, autophosphorylated. Thr-173 is required for autophosphorylation and transphosphorylation activities. Thr-175 is not necessary for autophosphorylation activity, but is required for full kinase activity.

It localises to the cell membrane. It catalyses the reaction L-seryl-[protein] + ATP = O-phospho-L-seryl-[protein] + ADP + H(+). It carries out the reaction L-threonyl-[protein] + ATP = O-phospho-L-threonyl-[protein] + ADP + H(+). In terms of biological role, phosphorylates the DNA-binding protein MT2231. May be involved in the regulation of cell division and cell envelope biosynthesis. This is Serine/threonine-protein kinase PknL (pknL) from Mycobacterium tuberculosis (strain CDC 1551 / Oshkosh).